A 292-amino-acid chain; its full sequence is Homoserine kinase (292 aa).

Position 84–94 (proline 84–alanine 94) interacts with ATP.

The protein belongs to the GHMP kinase family. Homoserine kinase subfamily.

It localises to the cytoplasm. It carries out the reaction L-homoserine + ATP = O-phospho-L-homoserine + ADP + H(+). It participates in amino-acid biosynthesis; L-threonine biosynthesis; L-threonine from L-aspartate: step 4/5. In terms of biological role, catalyzes the ATP-dependent phosphorylation of L-homoserine to L-homoserine phosphate. This Thermus thermophilus (strain ATCC 27634 / DSM 579 / HB8) protein is Homoserine kinase.